Reading from the N-terminus, the 437-residue chain is UPF0597 protein Shal_0864 (437 aa).

This sequence belongs to the UPF0597 family.

The sequence is that of UPF0597 protein Shal_0864 from Shewanella halifaxensis (strain HAW-EB4).